Reading from the N-terminus, the 90-residue chain is DNA-directed RNA polymerase subunit omega (90 aa).

Positions 69–90 (RQEQQEQDAAELAAVSSITHNR) are disordered.

The protein belongs to the RNA polymerase subunit omega family. The RNAP catalytic core consists of 2 alpha, 1 beta, 1 beta' and 1 omega subunit. When a sigma factor is associated with the core the holoenzyme is formed, which can initiate transcription.

The enzyme catalyses RNA(n) + a ribonucleoside 5'-triphosphate = RNA(n+1) + diphosphate. Functionally, promotes RNA polymerase assembly. Latches the N- and C-terminal regions of the beta' subunit thereby facilitating its interaction with the beta and alpha subunits. The sequence is that of DNA-directed RNA polymerase subunit omega from Aliivibrio salmonicida (strain LFI1238) (Vibrio salmonicida (strain LFI1238)).